Reading from the N-terminus, the 134-residue chain is Small ribosomal subunit protein uS11 (134 aa).

It belongs to the universal ribosomal protein uS11 family. In terms of assembly, part of the 30S ribosomal subunit. Interacts with proteins S7 and S18. Binds to IF-3.

In terms of biological role, located on the platform of the 30S subunit, it bridges several disparate RNA helices of the 16S rRNA. Forms part of the Shine-Dalgarno cleft in the 70S ribosome. The sequence is that of Small ribosomal subunit protein uS11 from Polaromonas naphthalenivorans (strain CJ2).